A 246-amino-acid chain; its full sequence is tRNA (guanine-N(7)-)-methyltransferase (246 aa).

S-adenosyl-L-methionine contacts are provided by E77, E102, D129, and D152. D152 is a catalytic residue. Residues K156, D188, and 225–228 contribute to the substrate site; that span reads TKFE.

Belongs to the class I-like SAM-binding methyltransferase superfamily. TrmB family.

The enzyme catalyses guanosine(46) in tRNA + S-adenosyl-L-methionine = N(7)-methylguanosine(46) in tRNA + S-adenosyl-L-homocysteine. The protein operates within tRNA modification; N(7)-methylguanine-tRNA biosynthesis. Its function is as follows. Catalyzes the formation of N(7)-methylguanine at position 46 (m7G46) in tRNA. In Haemophilus influenzae (strain PittGG), this protein is tRNA (guanine-N(7)-)-methyltransferase.